Consider the following 173-residue polypeptide: RNA pyrophosphohydrolase (173 aa).

A Nudix hydrolase domain is found at 11 to 164; sequence PYRRCVGVVV…KKHVYRKVVS (154 aa). The Nudix box motif lies at 52–73; the sequence is GGIDEGEEPLDAACRELYEETG.

The protein belongs to the Nudix hydrolase family. RppH subfamily. A divalent metal cation serves as cofactor.

Its function is as follows. Accelerates the degradation of transcripts by removing pyrophosphate from the 5'-end of triphosphorylated RNA, leading to a more labile monophosphorylated state that can stimulate subsequent ribonuclease cleavage. This chain is RNA pyrophosphohydrolase, found in Bartonella quintana (strain Toulouse) (Rochalimaea quintana).